Reading from the N-terminus, the 257-residue chain is MLAKRIIPCLDVRNGQVVKGVQFRNHEIIGDIVPLAARYAEEGADELVFYDITASSDGRTVDKSWVERVAEVIDIPFCVAGGIKTIADAEQIFTFGADKISINSPALADPDLISRLADRFGVQAIVVGIDSWFEQETGKYWVNQYTGDESRTRQTNWQLLDWVKEVQKRGAGEIVLNMMNQDGVRNGYDLTQLKLVRDVCKVPLIASGGAGEMVHFRDAFIEANVDGALAASVFHKQIINIGELKEYLAREGVEVRR.

Catalysis depends on residues aspartate 11 and aspartate 130.

It belongs to the HisA/HisF family. As to quaternary structure, heterodimer of HisH and HisF.

It is found in the cytoplasm. It catalyses the reaction 5-[(5-phospho-1-deoxy-D-ribulos-1-ylimino)methylamino]-1-(5-phospho-beta-D-ribosyl)imidazole-4-carboxamide + L-glutamine = D-erythro-1-(imidazol-4-yl)glycerol 3-phosphate + 5-amino-1-(5-phospho-beta-D-ribosyl)imidazole-4-carboxamide + L-glutamate + H(+). The protein operates within amino-acid biosynthesis; L-histidine biosynthesis; L-histidine from 5-phospho-alpha-D-ribose 1-diphosphate: step 5/9. Its function is as follows. IGPS catalyzes the conversion of PRFAR and glutamine to IGP, AICAR and glutamate. The HisF subunit catalyzes the cyclization activity that produces IGP and AICAR from PRFAR using the ammonia provided by the HisH subunit. The protein is Imidazole glycerol phosphate synthase subunit HisF of Mannheimia succiniciproducens (strain KCTC 0769BP / MBEL55E).